Consider the following 56-residue polypeptide: Small ribosomal subunit protein uS14 (56 aa).

Cys-21, Cys-24, Cys-39, and Cys-42 together coordinate Zn(2+).

Belongs to the universal ribosomal protein uS14 family. Component of the 40S small ribosomal subunit. It depends on Zn(2+) as a cofactor.

Its subcellular location is the cytoplasm. The protein resides in the cytosol. The protein localises to the rough endoplasmic reticulum. This is Small ribosomal subunit protein uS14 (RpS29) from Culex quinquefasciatus (Southern house mosquito).